The primary structure comprises 163 residues: Large ribosomal subunit protein uL15 (163 aa).

Residues 1 to 29 (MSKKRRQRGSRTHGGGSHKNRRGAGHRGG) show a composition bias toward basic residues. 2 disordered regions span residues 1–59 (MSKK…KTRR) and 135–163 (VADG…DEES). 2 stretches are compositionally biased toward basic and acidic residues: residues 33-46 (AGRD…HEPL) and 142-154 (LSER…AEKD).

The protein belongs to the universal ribosomal protein uL15 family. As to quaternary structure, part of the 50S ribosomal subunit.

In terms of biological role, binds to the 23S rRNA. This chain is Large ribosomal subunit protein uL15, found in Natronomonas pharaonis (strain ATCC 35678 / DSM 2160 / CIP 103997 / JCM 8858 / NBRC 14720 / NCIMB 2260 / Gabara) (Halobacterium pharaonis).